Consider the following 210-residue polypeptide: Pyridoxine/pyridoxamine 5'-phosphate oxidase (210 aa).

Residues 7–10 (REDY) and Lys65 contribute to the substrate site. Residues 60 to 65 (RMVLLK), 75 to 76 (FT), Arg81, Lys82, and Gln104 contribute to the FMN site. Substrate is bound by residues Tyr122, Arg126, and Ser130. FMN is bound by residues 139-140 (QS) and Trp183. 189–191 (RLH) serves as a coordination point for substrate. FMN is bound at residue Arg193.

Belongs to the pyridoxamine 5'-phosphate oxidase family. Homodimer. FMN serves as cofactor.

It catalyses the reaction pyridoxamine 5'-phosphate + O2 + H2O = pyridoxal 5'-phosphate + H2O2 + NH4(+). The enzyme catalyses pyridoxine 5'-phosphate + O2 = pyridoxal 5'-phosphate + H2O2. It functions in the pathway cofactor metabolism; pyridoxal 5'-phosphate salvage; pyridoxal 5'-phosphate from pyridoxamine 5'-phosphate: step 1/1. Its pathway is cofactor metabolism; pyridoxal 5'-phosphate salvage; pyridoxal 5'-phosphate from pyridoxine 5'-phosphate: step 1/1. Functionally, catalyzes the oxidation of either pyridoxine 5'-phosphate (PNP) or pyridoxamine 5'-phosphate (PMP) into pyridoxal 5'-phosphate (PLP). The polypeptide is Pyridoxine/pyridoxamine 5'-phosphate oxidase (Neisseria meningitidis serogroup C (strain 053442)).